A 629-amino-acid polypeptide reads, in one-letter code: Probable potassium transport system protein Kup 3 (629 aa).

12 helical membrane-spanning segments follow: residues 20-40 (LSLS…LYTF), 61-81 (VSLI…HFAL), 106-126 (PFII…GTIT), 143-163 (PSLK…LFAI), 171-191 (IGKA…ILGA), 209-229 (GLSF…GVFL), 253-273 (WFGL…ALVL), 291-311 (FLLP…QAII), 343-363 (IYIG…TIGF), 372-392 (AYGI…FIAL), 400-420 (IITS…FFAA), and 425-445 (FING…MMYI).

The protein belongs to the HAK/KUP transporter (TC 2.A.72) family.

The protein localises to the cell inner membrane. The catalysed reaction is K(+)(in) + H(+)(in) = K(+)(out) + H(+)(out). In terms of biological role, transport of potassium into the cell. Likely operates as a K(+):H(+) symporter. The protein is Probable potassium transport system protein Kup 3 of Legionella pneumophila subsp. pneumophila (strain Philadelphia 1 / ATCC 33152 / DSM 7513).